The sequence spans 362 residues: Isopentenyl-diphosphate delta-isomerase (362 aa).

5-6 contacts substrate; it reads RK. FMN is bound by residues 63–65, Ser-93, and Asn-122; that span reads AMT. Gln-152 lines the substrate pocket. Glu-153 serves as a coordination point for Mg(2+). FMN-binding positions include Lys-184, Thr-214, 259-261, and 280-281; these read GIR and AG.

Belongs to the IPP isomerase type 2 family. In terms of assembly, homooctamer. Dimer of tetramers. FMN serves as cofactor. It depends on NADPH as a cofactor. The cofactor is Mg(2+).

It is found in the cytoplasm. It carries out the reaction isopentenyl diphosphate = dimethylallyl diphosphate. Functionally, involved in the biosynthesis of isoprenoids. Catalyzes the 1,3-allylic rearrangement of the homoallylic substrate isopentenyl (IPP) to its allylic isomer, dimethylallyl diphosphate (DMAPP). This chain is Isopentenyl-diphosphate delta-isomerase, found in Nocardia farcinica (strain IFM 10152).